We begin with the raw amino-acid sequence, 207 residues long: Small ribosomal subunit protein uS4 (207 aa).

The segment at 31–53 (KAKFDSKPGQHGRTSGARTSDYG) is disordered. The S4 RNA-binding domain occupies 97–157 (CRLDNVVYRM…EKSKKQARIV (61 aa)).

The protein belongs to the universal ribosomal protein uS4 family. In terms of assembly, part of the 30S ribosomal subunit. Contacts protein S5. The interaction surface between S4 and S5 is involved in control of translational fidelity.

Its function is as follows. One of the primary rRNA binding proteins, it binds directly to 16S rRNA where it nucleates assembly of the body of the 30S subunit. In terms of biological role, with S5 and S12 plays an important role in translational accuracy. This Acidovorax ebreus (strain TPSY) (Diaphorobacter sp. (strain TPSY)) protein is Small ribosomal subunit protein uS4.